Consider the following 556-residue polypeptide: Formate--tetrahydrofolate ligase (556 aa).

ATP is bound at residue 65 to 72 (TPAGEGKS).

The protein belongs to the formate--tetrahydrofolate ligase family.

It carries out the reaction (6S)-5,6,7,8-tetrahydrofolate + formate + ATP = (6R)-10-formyltetrahydrofolate + ADP + phosphate. It participates in one-carbon metabolism; tetrahydrofolate interconversion. This chain is Formate--tetrahydrofolate ligase, found in Streptococcus pneumoniae serotype 19F (strain G54).